The following is a 238-amino-acid chain: Testis-specific gene A8 protein (238 aa).

The disordered stretch occupies residues Gly-35 to Thr-238. The span at Lys-39–Gly-48 shows a compositional bias: basic residues. A run of 8 repeats spans residues Ala-79 to Ser-93, Ala-94 to Ser-108, Ala-109 to Ser-123, Ala-124 to Ser-138, Pro-153 to Ala-158, Pro-171 to Ala-176, Pro-180 to Ala-185, and Pro-189 to Ala-194. The segment at Ala-79 to Ala-148 is 4 X 15 AA tandem repeats of A-A-A-A-A-P-E-A-A-A-S-[PL]-E-S-S. Low complexity-rich tracts occupy residues Ala-79–Ala-200 and Trp-208–Lys-220. The 4 X 6 AA repeats of P-A-A-P-E-A stretch occupies residues Pro-153–Ala-194.

In terms of tissue distribution, specifically expressed in testis (at protein level).

It is found in the cytoplasm. The protein resides in the nucleus. It localises to the nucleoplasm. This is Testis-specific gene A8 protein from Mus musculus (Mouse).